A 535-amino-acid chain; its full sequence is Nuclear/nucleolar GTPase 2 (535 aa).

Positions 1 to 42 (MAKKKERAVNVSGKPRHSLDVNRANDKKGAGGGAGGGGGGRS) are disordered. Residues 17–29 (HSLDVNRANDKKG) are compositionally biased toward basic and acidic residues. Residues 30-41 (AGGGAGGGGGGR) are compositionally biased toward gly residues. In terms of domain architecture, CP-type G spans 213–374 (WGELYKVIDS…LIDCPGVVYQ (162 aa)). The interval 261–264 (NKCD) is G4. The interval 290–292 (SIN) is G5. The interval 323 to 330 (GYPNVGKS) is G1. The segment at 349–353 (GETKV) is G2. Residues 367–370 (DCPG) are G3. The disordered stretch occupies residues 464–494 (FFVPPPQQGEDSPSETAEPVEKSDEEGVSSD).

This sequence belongs to the TRAFAC class YlqF/YawG GTPase family. RsgA subfamily. In terms of assembly, interacts (via N-terminus) with the 60S ribosomal proteins RPL10A. This interaction is enhanced by the addition of GTP. Expressed in roots, shoot apical meristem, leaves, leaf sheaths and flowers.

Its subcellular location is the nucleus. It is found in the nucleolus. With respect to regulation, the GTPase activity is stimulated in the presence of ribosomes, particularly of the 60S subunit. In terms of biological role, GTPase involved in pre-60S ribosomal subunit maturation. This Oryza sativa subsp. japonica (Rice) protein is Nuclear/nucleolar GTPase 2.